The sequence spans 114 residues: Hemerythrin subunit 2 (114 aa).

Positions 26, 55, 59, 74, 78, 102, and 107 each coordinate Fe cation.

It belongs to the hemerythrin family.

In terms of biological role, hemerythrin is a respiratory protein in blood cells of certain marine worms. The oxygen-binding site in each chain contains two iron atoms. The chain is Hemerythrin subunit 2 from Golfingia vulgaris (Marine worm).